Here is a 778-residue protein sequence, read N- to C-terminus: Pentatricopeptide repeat-containing protein At3g09650, chloroplastic (778 aa).

The transit peptide at 1 to 65 (MNILRPPTSS…RSASGTANSS (65 aa)) directs the protein to the chloroplast. PPR repeat units lie at residues 235-269 (DTAA…DCEP), 270-304 (DVLT…GIKV), and 305-339 (CMTT…RRDL). The tract at residues 351 to 381 (LKEKEEEEAEDDEDAFEDDEDSGYSARDEVS) is disordered. A compositionally biased stretch (acidic residues) spans 355-372 (EEEEAEDDEDAFEDDEDS). PPR repeat units lie at residues 413–443 (DSRI…MRRQ), 451–485 (DEVT…GVPA), 486–521 (NRIT…GIEP), 522–556 (DVVS…GIAP), 557–587 (TKIS…MMND), 593–627 (DLIA…GFYP), and 628–658 (NVAT…IKER).

The protein belongs to the PPR family. P subfamily.

Its subcellular location is the plastid. The protein localises to the chloroplast stroma. Functionally, involved in the processing of polycistronic chloroplast psbB-psbT-psbH-petB-petD transcript. Could bind RNA. This chain is Pentatricopeptide repeat-containing protein At3g09650, chloroplastic (HCF152), found in Arabidopsis thaliana (Mouse-ear cress).